The following is a 47-amino-acid chain: Large ribosomal subunit protein bL33C (47 aa).

The protein belongs to the bacterial ribosomal protein bL33 family.

The protein is Large ribosomal subunit protein bL33C of Staphylococcus epidermidis (strain ATCC 35984 / DSM 28319 / BCRC 17069 / CCUG 31568 / BM 3577 / RP62A).